Here is a 146-residue protein sequence, read N- to C-terminus: MEINREEFSEVVVNIGRVTKVVKGGRRFRFNALVVVGNKNGLVGFGLGKAKEVPDAIKKAIDDAFKNIIKVNIKGTTIAHDIEHKYNASRILLKPASEGTGVIAGGSTRPVIELAGIKDILTKSLGSNNPYNVVRATIDALARIKA.

One can recognise an S5 DRBM domain in the interval 8-71 (FSEVVVNIGR…DDAFKNIIKV (64 aa)).

Belongs to the universal ribosomal protein uS5 family. In terms of assembly, part of the 30S ribosomal subunit. Contacts proteins S4 and S8.

With S4 and S12 plays an important role in translational accuracy. In terms of biological role, located at the back of the 30S subunit body where it stabilizes the conformation of the head with respect to the body. The protein is Small ribosomal subunit protein uS5 of Helicobacter hepaticus (strain ATCC 51449 / 3B1).